Here is a 256-residue protein sequence, read N- to C-terminus: MKIITCYKCVPDEQDIAVNNADGSLDFSKADAKISQYDLNAIEAACQLKQQAAEAQVTALSVGGKALTNAKGRKDVLSRGPDELIVVIDDQFEQALPQQTASALAAAAQKAGFDLILCGDGSSDLYAQQVGLLVGEILNIPAVNGVSKIISLTADTLTVERELEDETETLSIPLPAVVAVSTDINSPQIPSMKAILGAAKKPVQVWSAADIGFNAVDAWSEQQVAAPKQRERQRIVIEGDGEEQIAAFAENLRKVI.

The protein belongs to the ETF beta-subunit/FixA family. As to quaternary structure, heterodimer of FixA and FixB.

It functions in the pathway amine and polyamine metabolism; carnitine metabolism. Required for anaerobic carnitine reduction. May bring reductant to CaiA. The sequence is that of Protein FixA from Shigella flexneri serotype 5b (strain 8401).